A 646-amino-acid chain; its full sequence is Beta-mannosyltransferase 6 (646 aa).

Residues 1–25 (MGNYKPSIKQYVVTVKAIKSSQFGR) lie on the Cytoplasmic side of the membrane. A helical transmembrane segment spans residues 26–46 (LGICAVVLLFVLGYPFYFISN). Topologically, residues 47–646 (NPFDTSIRYQ…LTGGWLPSHN (600 aa)) are extracellular. N-linked (GlcNAc...) asparagine glycosylation is found at N62, N81, N103, N117, N127, N132, N146, N334, and N393.

It belongs to the BMT family.

The protein resides in the membrane. Beta-mannosyltransferase involved in cell wall biosynthesis. Required for beta-1,2-mannose transfer on phospholipomannan. Required for pro-inflammatory response in macrophages through phospholipomannan-induced TNF-alpha production. The sequence is that of Beta-mannosyltransferase 6 (BMT6) from Candida albicans (strain SC5314 / ATCC MYA-2876) (Yeast).